We begin with the raw amino-acid sequence, 44 residues long: uncharacterized protein (44 aa).

A signal peptide spans 1–28 (MLRDLGRRVAIAAILSGIILGGMSISLA).

This is an uncharacterized protein from Bacillus subtilis (strain 168).